A 728-amino-acid chain; its full sequence is NF-kappa-B inhibitor zeta (728 aa).

The tract at residues 45–107 (GAGDTGYLSA…PHMGVGRQQR (63 aa)) is disordered. Positions 53 to 82 (SAVPSAPGSPGSDSSDFSSTSSVSSCGAVE) are enriched in low complexity. Basic and acidic residues predominate over residues 83-96 (SRPRGGARAERPQV). The region spanning 107 to 129 (RGPFQGVRVKNSVKELLLHIRSN) is the OCA domain. The short motif at 163–178 (KRKGPDPLSDGPVCKR) is the Nuclear localization signal element. Composition is skewed to polar residues over residues 241–250 (PTVPQNSPRD) and 268–288 (QPFQ…YQYS). The segment at 241-334 (PTVPQNSPRD…SQSPKYDSNL (94 aa)) is disordered. Over residues 303–315 (QQQHQQNYPHNSP) the composition is skewed to low complexity. The span at 316 to 330 (LQFSPYSRMSQSPKY) shows a compositional bias: polar residues. A required for transcriptional activity region spans residues 329-403 (KYDSNLFDTH…VGVHDVGSHS (75 aa)). The interval 414-728 (MGSPMNTTQL…KSIQQRAPPY (315 aa)) is interaction with NFKB1/p50. ANK repeat units follow at residues 453 to 482 (DGDT…ALHM), 489 to 518 (NGQS…QVNT), 522 to 551 (WGRT…RSNQ), 561 to 589 (DGLT…SHSP), 591 to 617 (VQDL…AVEA), 622 to 651 (SGRT…CLSF), and 658 to 691 (NGNT…DPST).

In terms of assembly, interacts with NFKB1/p50. Interacts with RELA. Interacts with AKIRIN2. Expressed in kidney, liver, lung and heart. Expressed at very low levels in skeletal muscle, spleen and brain.

Its subcellular location is the nucleus. Functionally, involved in regulation of NF-kappa-B transcription factor complexes. Inhibits NF-kappa-B activity without affecting its nuclear translocation upon stimulation. Inhibits DNA-binding of RELA and NFKB1/p50, and of the NF-kappa-B p65-p50 heterodimer and the NF-kappa-B p50-p50 homodimer. Also seems to activate NF-kappa-B-mediated transcription. In vitro, upon association with NFKB1/p50 has transcriptional activation activity and, together with NFKB1/p50 and RELA, is recruited to LCN2 promoters. Promotes transcription of LCN2 and DEFB4. Is recruited to IL-6 promoters and activates IL-6 but decreases TNF-alpha production in response to LPS. Seems to be involved in the induction of inflammatory genes activated through TLR/IL-1 receptor signaling. Involved in the induction of T helper 17 cells (Th17) differentiation upon recognition of antigen by T cell antigen receptor (TCR). This Mus musculus (Mouse) protein is NF-kappa-B inhibitor zeta (Nfkbiz).